Here is a 148-residue protein sequence, read N- to C-terminus: UPF0756 membrane protein YeaL (148 aa).

4 consecutive transmembrane segments (helical) span residues 14-34 (ALGF…LIIV), 51-71 (LTIG…SGSL), 80-100 (FFNW…WLGG), and 121-141 (VLGV…AGLV).

This sequence belongs to the UPF0756 family.

It is found in the cell membrane. The chain is UPF0756 membrane protein YeaL from Escherichia fergusonii (strain ATCC 35469 / DSM 13698 / CCUG 18766 / IAM 14443 / JCM 21226 / LMG 7866 / NBRC 102419 / NCTC 12128 / CDC 0568-73).